Here is a 283-residue protein sequence, read N- to C-terminus: Bifunctional protein FolD (283 aa).

An NADP(+)-binding site is contributed by 166–168; the sequence is GAS.

It belongs to the tetrahydrofolate dehydrogenase/cyclohydrolase family. As to quaternary structure, homodimer.

The catalysed reaction is (6R)-5,10-methylene-5,6,7,8-tetrahydrofolate + NADP(+) = (6R)-5,10-methenyltetrahydrofolate + NADPH. It carries out the reaction (6R)-5,10-methenyltetrahydrofolate + H2O = (6R)-10-formyltetrahydrofolate + H(+). Its pathway is one-carbon metabolism; tetrahydrofolate interconversion. Functionally, catalyzes the oxidation of 5,10-methylenetetrahydrofolate to 5,10-methenyltetrahydrofolate and then the hydrolysis of 5,10-methenyltetrahydrofolate to 10-formyltetrahydrofolate. The sequence is that of Bifunctional protein FolD from Coxiella burnetii (strain CbuK_Q154) (Coxiella burnetii (strain Q154)).